A 239-amino-acid polypeptide reads, in one-letter code: DNA repair protein RecO (239 aa).

Belongs to the RecO family.

In terms of biological role, involved in DNA repair and RecF pathway recombination. In Cereibacter sphaeroides (strain ATCC 17029 / ATH 2.4.9) (Rhodobacter sphaeroides), this protein is DNA repair protein RecO.